A 492-amino-acid polypeptide reads, in one-letter code: N-succinylglutamate 5-semialdehyde dehydrogenase (492 aa).

220-225 (GSANTG) lines the NAD(+) pocket. Active-site residues include Glu-243 and Cys-277.

The protein belongs to the aldehyde dehydrogenase family. AstD subfamily.

The enzyme catalyses N-succinyl-L-glutamate 5-semialdehyde + NAD(+) + H2O = N-succinyl-L-glutamate + NADH + 2 H(+). The protein operates within amino-acid degradation; L-arginine degradation via AST pathway; L-glutamate and succinate from L-arginine: step 4/5. Catalyzes the NAD-dependent reduction of succinylglutamate semialdehyde into succinylglutamate. This is N-succinylglutamate 5-semialdehyde dehydrogenase from Escherichia coli (strain 55989 / EAEC).